Consider the following 359-residue polypeptide: Small ribosomal subunit protein mS22 (359 aa).

The protein belongs to the mitochondrion-specific ribosomal protein mS22 family. In terms of assembly, component of the mitochondrial ribosome small subunit (28S) which comprises a 12S rRNA and about 30 distinct proteins.

It is found in the mitochondrion. This Bos taurus (Bovine) protein is Small ribosomal subunit protein mS22 (MRPS22).